Consider the following 126-residue polypeptide: Phosphoribosyl-AMP cyclohydrolase (126 aa).

Position 76 (D76) interacts with Mg(2+). C77 contacts Zn(2+). D78 and D80 together coordinate Mg(2+). Positions 94 and 101 each coordinate Zn(2+).

Belongs to the PRA-CH family. In terms of assembly, homodimer. The cofactor is Mg(2+). Zn(2+) serves as cofactor.

Its subcellular location is the cytoplasm. The catalysed reaction is 1-(5-phospho-beta-D-ribosyl)-5'-AMP + H2O = 1-(5-phospho-beta-D-ribosyl)-5-[(5-phospho-beta-D-ribosylamino)methylideneamino]imidazole-4-carboxamide. The protein operates within amino-acid biosynthesis; L-histidine biosynthesis; L-histidine from 5-phospho-alpha-D-ribose 1-diphosphate: step 3/9. Its function is as follows. Catalyzes the hydrolysis of the adenine ring of phosphoribosyl-AMP. The sequence is that of Phosphoribosyl-AMP cyclohydrolase from Nitratidesulfovibrio vulgaris (strain ATCC 29579 / DSM 644 / CCUG 34227 / NCIMB 8303 / VKM B-1760 / Hildenborough) (Desulfovibrio vulgaris).